We begin with the raw amino-acid sequence, 118 residues long: Large ribosomal subunit protein bL20 (118 aa).

It belongs to the bacterial ribosomal protein bL20 family.

Its function is as follows. Binds directly to 23S ribosomal RNA and is necessary for the in vitro assembly process of the 50S ribosomal subunit. It is not involved in the protein synthesizing functions of that subunit. This chain is Large ribosomal subunit protein bL20, found in Lachnoclostridium phytofermentans (strain ATCC 700394 / DSM 18823 / ISDg) (Clostridium phytofermentans).